We begin with the raw amino-acid sequence, 111 residues long: Iron-sulfur cluster assembly protein CyaY (111 aa).

It belongs to the frataxin family.

Involved in iron-sulfur (Fe-S) cluster assembly. May act as a regulator of Fe-S biogenesis. The sequence is that of Iron-sulfur cluster assembly protein CyaY from Cupriavidus metallidurans (strain ATCC 43123 / DSM 2839 / NBRC 102507 / CH34) (Ralstonia metallidurans).